A 280-amino-acid chain; its full sequence is 2-dehydro-3-deoxyphosphooctonate aldolase (280 aa).

The protein belongs to the KdsA family.

It localises to the cytoplasm. It carries out the reaction D-arabinose 5-phosphate + phosphoenolpyruvate + H2O = 3-deoxy-alpha-D-manno-2-octulosonate-8-phosphate + phosphate. Its pathway is carbohydrate biosynthesis; 3-deoxy-D-manno-octulosonate biosynthesis; 3-deoxy-D-manno-octulosonate from D-ribulose 5-phosphate: step 2/3. It participates in bacterial outer membrane biogenesis; lipopolysaccharide biosynthesis. The chain is 2-dehydro-3-deoxyphosphooctonate aldolase from Pseudomonas putida (strain W619).